Consider the following 149-residue polypeptide: MKVILTKDVEGWGTIGDIIDVKRGFARNYLIPKGFALEATESHIKHVQEILKQKARKLEREKAKAEEIAKQLEGLEIEIKKSVGTTGKLFGSVTTSDIAEVLKEKGIEVEKKKIMLRNPIKNIGSYNITIRLHPQVSATIKVHVTPENI.

The protein belongs to the bacterial ribosomal protein bL9 family.

In terms of biological role, binds to the 23S rRNA. This chain is Large ribosomal subunit protein bL9, found in Persephonella marina (strain DSM 14350 / EX-H1).